The following is a 139-amino-acid chain: ATP synthase epsilon chain (139 aa).

This sequence belongs to the ATPase epsilon chain family. F-type ATPases have 2 components, CF(1) - the catalytic core - and CF(0) - the membrane proton channel. CF(1) has five subunits: alpha(3), beta(3), gamma(1), delta(1), epsilon(1). CF(0) has three main subunits: a, b and c.

Its subcellular location is the cell inner membrane. Its function is as follows. Produces ATP from ADP in the presence of a proton gradient across the membrane. The sequence is that of ATP synthase epsilon chain from Acinetobacter baumannii (strain AB307-0294).